Reading from the N-terminus, the 248-residue chain is Protein maestro (248 aa).

A disordered region spans residues 1–20 (MDQRQRRILGQPLSIPTSQP). 2 HEAT repeats span residues 44–79 (EPLK…AREA) and 128–163 (SFFI…AAFA).

The protein resides in the nucleus. The protein localises to the nucleolus. The chain is Protein maestro (MRO) from Macaca fascicularis (Crab-eating macaque).